The primary structure comprises 231 residues: 7-cyano-7-deazaguanine synthase (231 aa).

11–21 (LSGGLDSATTM) is a binding site for ATP. The Zn(2+) site is built by C195, C205, C208, and C211.

Belongs to the QueC family. Requires Zn(2+) as cofactor.

The enzyme catalyses 7-carboxy-7-deazaguanine + NH4(+) + ATP = 7-cyano-7-deazaguanine + ADP + phosphate + H2O + H(+). It functions in the pathway purine metabolism; 7-cyano-7-deazaguanine biosynthesis. In terms of biological role, catalyzes the ATP-dependent conversion of 7-carboxy-7-deazaguanine (CDG) to 7-cyano-7-deazaguanine (preQ(0)). This chain is 7-cyano-7-deazaguanine synthase, found in Syntrophus aciditrophicus (strain SB).